The chain runs to 285 residues: 4-hydroxybenzoate octaprenyltransferase (285 aa).

A run of 8 helical transmembrane segments spans residues 28-48, 86-106, 110-130, 133-153, 160-180, 207-227, 232-252, and 262-284; these read LWALWMAAGGPPALSVFCIFF, IAAWEAVLIAAVLALIAFALI, NSLTKWLAVVAAVVAGTYPFF, FFAIPQAYLGIAFGFGIPMAF, VPLVAWVMLLANVFWAVAYDT, VAAIMLCYAAFLVLMGWAGVM, WPYWVGLAAAAVCAGYHYTLI, and AAFRHNNWLGACVFAGTAVAYAI.

The protein belongs to the UbiA prenyltransferase family. Mg(2+) is required as a cofactor.

Its subcellular location is the cell inner membrane. It catalyses the reaction all-trans-octaprenyl diphosphate + 4-hydroxybenzoate = 4-hydroxy-3-(all-trans-octaprenyl)benzoate + diphosphate. It participates in cofactor biosynthesis; ubiquinone biosynthesis. Its function is as follows. Catalyzes the prenylation of para-hydroxybenzoate (PHB) with an all-trans polyprenyl group. Mediates the second step in the final reaction sequence of ubiquinone-8 (UQ-8) biosynthesis, which is the condensation of the polyisoprenoid side chain with PHB, generating the first membrane-bound Q intermediate 3-octaprenyl-4-hydroxybenzoate. This chain is 4-hydroxybenzoate octaprenyltransferase, found in Cupriavidus pinatubonensis (strain JMP 134 / LMG 1197) (Cupriavidus necator (strain JMP 134)).